The primary structure comprises 531 residues: Probable mitochondrial-processing peptidase subunit beta, mitochondrial (531 aa).

The N-terminal 78 residues, 1-78 (MAMKNLLSLA…ENPDKRFLKY (78 aa)), are a transit peptide targeting the mitochondrion. Positions 30–50 (SAIDSVPASASPTALSPPPPH) are disordered. His141 serves as a coordination point for Zn(2+). Glu144 acts as the Proton acceptor in catalysis. His145 contacts Zn(2+). Glu214 is a catalytic residue. Glu221 serves as a coordination point for Zn(2+).

It belongs to the peptidase M16 family. Heterodimer of an alpha subunit and a beta subunit subunits, forming the mitochondrial processing protease (MPP) in which the alpha subunit is involved in substrate recognition and binding and the beta subunit is the catalytic subunit. Component of the ubiquinol-cytochrome c oxidoreductase (cytochrome b-c1 complex, complex III, CIII), a multisubunit enzyme composed of 10 subunits. The complex is composed of 3 respiratory subunits cytochrome b (MT-CYB), cytochrome c1 (CYC1-1 or CYC1-2) and Rieske protein (UCR1-1 or UCR1-2), 2 core protein subunits MPPalpha1 (or MPPalpha2) and MPPB, and 5 low-molecular weight protein subunits QCR7-1 (or QCR7-2), UCRQ-1 (or UCRQ-2), QCR9, UCRY and probably QCR6-1 (or QCR6-2). The complex exists as an obligatory dimer and forms supercomplexes (SCs) in the inner mitochondrial membrane with NADH-ubiquinone oxidoreductase (complex I, CI), resulting in different assemblies (supercomplexes SCI(1)III(2) and SCI(2)III(4)). Zn(2+) is required as a cofactor.

Its subcellular location is the mitochondrion. The protein localises to the mitochondrion inner membrane. It carries out the reaction Release of N-terminal transit peptides from precursor proteins imported into the mitochondrion, typically with Arg in position P2.. With respect to regulation, binding to the alpha subunit is required for catalytic activity. Catalytic subunit of the essential mitochondrial processing protease (MPP), which cleaves the mitochondrial sequence off newly imported precursors proteins. Preferentially, cleaves after an arginine at position P2. Its function is as follows. Component of the ubiquinol-cytochrome c oxidoreductase, a multisubunit transmembrane complex that is part of the mitochondrial electron transport chain which drives oxidative phosphorylation. The respiratory chain contains 3 multisubunit complexes succinate dehydrogenase (complex II, CII), ubiquinol-cytochrome c oxidoreductase (cytochrome b-c1 complex, complex III, CIII) and cytochrome c oxidase (complex IV, CIV), that cooperate to transfer electrons derived from NADH and succinate to molecular oxygen, creating an electrochemical gradient over the inner membrane that drives transmembrane transport and the ATP synthase. The cytochrome b-c1 complex catalyzes electron transfer from ubiquinol to cytochrome c, linking this redox reaction to translocation of protons across the mitochondrial inner membrane, with protons being carried across the membrane as hydrogens on the quinol. In the process called Q cycle, 2 protons are consumed from the matrix, 4 protons are released into the intermembrane space and 2 electrons are passed to cytochrome c. The sequence is that of Probable mitochondrial-processing peptidase subunit beta, mitochondrial (MPPbeta) from Arabidopsis thaliana (Mouse-ear cress).